Consider the following 129-residue polypeptide: Large ribosomal subunit protein bL12 (129 aa).

This sequence belongs to the bacterial ribosomal protein bL12 family. As to quaternary structure, homodimer. Part of the ribosomal stalk of the 50S ribosomal subunit. Forms a multimeric L10(L12)X complex, where L10 forms an elongated spine to which 2 to 4 L12 dimers bind in a sequential fashion. Binds GTP-bound translation factors.

In terms of biological role, forms part of the ribosomal stalk which helps the ribosome interact with GTP-bound translation factors. Is thus essential for accurate translation. The chain is Large ribosomal subunit protein bL12 from Solidesulfovibrio magneticus (strain ATCC 700980 / DSM 13731 / RS-1) (Desulfovibrio magneticus).